A 511-amino-acid chain; its full sequence is Cobyric acid synthase (511 aa).

The 193-residue stretch at 251 to 443 (LLDIAIICLP…IHGIFDNDVF (193 aa)) folds into the GATase cobBQ-type domain. Residue Cys332 is the Nucleophile of the active site. The active site involves His435.

Belongs to the CobB/CobQ family. CobQ subfamily.

The protein operates within cofactor biosynthesis; adenosylcobalamin biosynthesis. Its function is as follows. Catalyzes amidations at positions B, D, E, and G on adenosylcobyrinic A,C-diamide. NH(2) groups are provided by glutamine, and one molecule of ATP is hydrogenolyzed for each amidation. The protein is Cobyric acid synthase of Listeria monocytogenes serotype 4b (strain F2365).